An 82-amino-acid chain; its full sequence is Cell division topological specificity factor (82 aa).

This sequence belongs to the MinE family.

Prevents the cell division inhibition by proteins MinC and MinD at internal division sites while permitting inhibition at polar sites. This ensures cell division at the proper site by restricting the formation of a division septum at the midpoint of the long axis of the cell. The polypeptide is Cell division topological specificity factor (Buchnera aphidicola subsp. Cinara cedri (strain Cc)).